Reading from the N-terminus, the 1686-residue chain is Thrombospondin type-1 domain-containing protein 7A (1686 aa).

Residues 1–36 (MGLASRAPGKGGTSAGALASLFRVALLFFGLWDVQT) form the signal peptide. Topologically, residues 37-1635 (QTVANTRPTY…FGPDGKLKTW (1599 aa)) are extracellular. TSP type-1 domains are found at residues 44 to 103 (PTYI…RVCD), 107 to 181 (ELYD…IPCP), and 183 to 236 (DCVV…GKCE). A glycan (N-linked (GlcNAc...) asparagine) is linked at asparagine 223. The tract at residues 257–321 (IRQARDTGEA…EKKRMRDPET (65 aa)) is disordered. Composition is skewed to basic and acidic residues over residues 259–272 (QARDTGEARVPKAE) and 294–321 (EKKELRESKGERVRERVKEKKRMRDPET). 16 TSP type-1 domains span residues 385–441 (DCEV…SPQG), 448–535 (VVYN…IPCP), 537–596 (ECEV…PSCY), 656–717 (DCVL…HPCT), 718–797 (VYHW…LPCK), 799–859 (DCVV…SVCP), 860–932 (GYRW…LPCQ), 934–985 (DCQL…QYCP), 988–1061 (KYNA…IPCP), 1063–1123 (DCKL…SDCS), 1124–1191 (QYVW…LPCP), 1193–1247 (DCVL…SNCF), 1248–1311 (HYSY…VECP), 1313–1368 (NCQL…KPCF), 1369–1439 (SWRY…VPCP), and 1441–1502 (ECYL…GQCY). Intrachain disulfides connect cysteine 460–cysteine 530, cysteine 480–cysteine 534, and cysteine 491–cysteine 519. N-linked (GlcNAc...) asparagine glycosylation is present at asparagine 475. N-linked (GlcNAc...) asparagine glycosylation occurs at asparagine 525. Disulfide bonds link cysteine 657/cysteine 699 and cysteine 668/cysteine 672. A glycan (N-linked (GlcNAc...) asparagine) is linked at asparagine 701. 7 disulfide bridges follow: cysteine 711-cysteine 716, cysteine 729-cysteine 792, cysteine 756-cysteine 796, cysteine 767-cysteine 780, cysteine 800-cysteine 842, cysteine 811-cysteine 815, and cysteine 852-cysteine 858. Residue asparagine 739 is glycosylated (N-linked (GlcNAc...) asparagine). Asparagine 996 carries an N-linked (GlcNAc...) asparagine glycan. Intrachain disulfides connect cysteine 1000-cysteine 1056, cysteine 1022-cysteine 1060, cysteine 1033-cysteine 1046, cysteine 1064-cysteine 1101, cysteine 1075-cysteine 1079, and cysteine 1118-cysteine 1122. Asparagine 1071 is a glycosylation site (N-linked (GlcNAc...) asparagine). Asparagine 1212 carries N-linked (GlcNAc...) asparagine glycosylation. The cysteines at positions 1240 and 1246 are disulfide-linked. Asparagine 1252 is a glycosylation site (N-linked (GlcNAc...) asparagine). Cystine bridges form between cysteine 1259–cysteine 1306, cysteine 1267–cysteine 1310, cysteine 1278–cysteine 1291, cysteine 1314–cysteine 1352, cysteine 1325–cysteine 1329, cysteine 1362–cysteine 1367, cysteine 1378–cysteine 1434, cysteine 1385–cysteine 1438, cysteine 1396–cysteine 1415, cysteine 1442–cysteine 1486, cysteine 1453–cysteine 1457, and cysteine 1496–cysteine 1501. N-linked (GlcNAc...) asparagine glycosylation is present at asparagine 1303. N-linked (GlcNAc...) asparagine glycosylation occurs at asparagine 1393. N-linked (GlcNAc...) asparagine glycosylation occurs at asparagine 1527. The chain crosses the membrane as a helical span at residues 1636 to 1656 (VYGVAAGAFVLLVFIVSMTYL). Over 1657–1686 (ACKKPKKPQRRQMNNRLKPLTLAYDGDADM) the chain is Cytoplasmic.

Extensively N-glycosylated.

The protein localises to the cell membrane. Its subcellular location is the cell projection. Functionally, required for normal sprouting angiogenesis and normal embryonic development of intersegmental vessels (ISV). Required for normal function of the glomerular filtration barrier. Required for normal axon outgrowth on embryonic motor neurons at the level of the horizontal myoseptum. Required for normal expression of notch1b, suggesting that its functions in angiogenesis and neuron outgrowth are due to decreased expression of notch1b. Plays a role in actin cytoskeleton rearrangement. The polypeptide is Thrombospondin type-1 domain-containing protein 7A (Danio rerio (Zebrafish)).